The following is a 142-amino-acid chain: Snaclec 2 (142 aa).

The first 23 residues, 1–23 (MGRFIFVSFSLLVVFLSLSGTGA), serve as a signal peptide directing secretion. A disulfide bridge connects residues Cys-25 and Cys-36. Residues 32–139 (YEGHCYRVFQ…CSETHNVICK (108 aa)) form the C-type lectin domain. The N-linked (GlcNAc...) asparagine glycan is linked to Asn-43. Intrachain disulfides connect Cys-53–Cys-138 and Cys-115–Cys-130.

This sequence belongs to the snaclec family. Heterodimer; disulfide-linked. As to expression, expressed by the venom gland.

It is found in the secreted. In terms of biological role, interferes with one step of hemostasis (modulation of platelet aggregation, or coagulation cascade, for example). The chain is Snaclec 2 from Sistrurus catenatus edwardsii (Desert massasauga).